A 385-amino-acid chain; its full sequence is Na(+)/H(+) antiporter NhaA (385 aa).

11 helical membrane-spanning segments follow: residues 9 to 29 (YSAI…NVLD), 45 to 65 (IFGL…VFFF), 87 to 107 (IIPG…YLSV), 114 to 134 (GWPV…AIFG), 155 to 175 (AGIV…WIIV), 198 to 218 (TFLI…SVYQ), 220 to 235 (GIHA…IMLN), 245 to 265 (ALEP…AAMV), 282 to 302 (ILLG…IIAL), 312 to 332 (FFNL…SLLM), and 345 to 365 (QGVI…IILM).

Belongs to the NhaA Na(+)/H(+) (TC 2.A.33) antiporter family.

It is found in the cell membrane. The catalysed reaction is Na(+)(in) + 2 H(+)(out) = Na(+)(out) + 2 H(+)(in). Its function is as follows. Na(+)/H(+) antiporter that extrudes sodium in exchange for external protons. This Tropheryma whipplei (strain Twist) (Whipple's bacillus) protein is Na(+)/H(+) antiporter NhaA.